The sequence spans 364 residues: Chorismate synthase (364 aa).

Positions 48 and 54 each coordinate NADP(+). Residues 125 to 127 (RSS), 238 to 239 (NA), glycine 278, 293 to 297 (KPTSS), and arginine 319 each bind FMN.

This sequence belongs to the chorismate synthase family. As to quaternary structure, homotetramer. FMNH2 serves as cofactor.

The enzyme catalyses 5-O-(1-carboxyvinyl)-3-phosphoshikimate = chorismate + phosphate. The protein operates within metabolic intermediate biosynthesis; chorismate biosynthesis; chorismate from D-erythrose 4-phosphate and phosphoenolpyruvate: step 7/7. Catalyzes the anti-1,4-elimination of the C-3 phosphate and the C-6 proR hydrogen from 5-enolpyruvylshikimate-3-phosphate (EPSP) to yield chorismate, which is the branch point compound that serves as the starting substrate for the three terminal pathways of aromatic amino acid biosynthesis. This reaction introduces a second double bond into the aromatic ring system. In Marinobacter nauticus (strain ATCC 700491 / DSM 11845 / VT8) (Marinobacter aquaeolei), this protein is Chorismate synthase.